The following is a 595-amino-acid chain: Probable hydrolase M10 (595 aa).

Positions 1–23 (MRFTSTILLRVAVLLSLGGGSQT) are cleaved as a signal peptide. 6 N-linked (GlcNAc...) asparagine glycosylation sites follow: Asn-59, Asn-87, Asn-266, Asn-436, Asn-457, and Asn-561.

Belongs to the beta-lactamase family.

The protein operates within secondary metabolite biosynthesis. Probable hydrolase; part of the gene cluster that mediates the biosynthesis of squalestatin S1 (SQS1, also known as zaragozic acid A), a heavily oxidized fungal polyketide that offers potent cholesterol lowering activity by targeting squalene synthase (SS). SQS1 is composed of a 2,8-dioxobicyclic[3.2.1]octane-3,4,5-tricarboxyclic acid core that is connected to two lipophilic polyketide arms. These initial steps feature the priming of an unusual benzoic acid starter unit onto the highly reducing polyketide synthase pks2, followed by oxaloacetate extension and product release to generate a tricarboxylic acid containing product. The phenylalanine ammonia lyase (PAL) M7 and the acyl-CoA ligase M9 are involved in transforming phenylalanine into benzoyl-CoA. The citrate synthase-like protein R3 is involved in connecting the C-alpha-carbons of the hexaketide chain and oxaloacetate to afford the tricarboxylic acid unit. The potential hydrolytic enzymes, M8 and M10, are in close proximity to pks2 and may participate in product release. On the other side, the tetraketide arm is synthesized by a the squalestatin tetraketide synthase pks1 and enzymatically esterified to the core in the last biosynthetic step, by the acetyltransferase M4. The biosynthesis of the tetraketide must involve 3 rounds of chain extension. After the first and second rounds methyl-transfer occurs, and in all rounds of extension the ketoreductase and dehydratase are active. The enoyl reductase and C-MeT of pks1 are not active in the final round of extension. The acetyltransferase M4 appears to have a broad substrate selectivity for its acyl CoA substrate, allowing the in vitro synthesis of novel squalestatins. The biosynthesis of SQS1 requires several oxidative steps likely performed by oxidoreductases M1, R1 and R2. Finally, in support of the identification of the cluster as being responsible for SQS1 production, the cluster contains a gene encoding a putative squalene synthase (SS) R6, suggesting a likely mechanism for self-resistance. The polypeptide is Probable hydrolase M10 (Phoma sp. (strain ATCC 20986 / MF5453)).